Reading from the N-terminus, the 605-residue chain is MAKKPAAHATKPKPWTEMATHLVDVAMGRKPADLVIRNGRWVNVHSGEIIAGTDIAIAGGRFAYCGPNASHAIGQGTKVVDAGGRYLVPGLCDAHMHVESGMVTVTEFCRAVIPHGTTSMFIDPHEIANVLGLPGVRLMHDEAVAMPINVHVQMPSCVPSAPGLEHAGAELTVADVAEAMTWENIIGLGEVMNFPGVAANDPVMSGEIAATVRAGKTVGGHYASRDLGLPFHGYVAGGPEDDHEGTRAEDAIARVRQGMKAMLRLGSAWYDVASQIKAVTEGGIDPRNFILCTDDSHSGTLVHEGHMDRVVRHAIQQGLKPVTAIQMATINTAQHFRLEREIGSIAPGRLADLLIVSDLAAMTIDEVYARGVRLAKGGKLDIDIPAYDYPKTAKNTVKLGKKLRAGDFDITAPKGANEVRVRVIGVIENQAPTRALEADLPVEDGLVAMDRRNDVCQIALVERHRGTGGVTNAFVSGFGYMGDCAMASSVAHDAHHIICVGTNKQDMALAVNRLGQVGGGVVLFSKGKELALVEMPIAGLMSDERAEIVAAKAEKLTEAMRKMGCSLNNAYMQHSLLALVVIPELRISDVGLIDVTTFQKVDLFV.

Belongs to the metallo-dependent hydrolases superfamily. Adenine deaminase family. Requires Mn(2+) as cofactor.

The catalysed reaction is adenine + H2O + H(+) = hypoxanthine + NH4(+). In Mesorhizobium japonicum (strain LMG 29417 / CECT 9101 / MAFF 303099) (Mesorhizobium loti (strain MAFF 303099)), this protein is Adenine deaminase.